A 278-amino-acid chain; its full sequence is HTH-type transcriptional activator RhaS (278 aa).

Positions 174 to 272 (NLLLAWLEDH…NWSPRDIRQG (99 aa)) constitute an HTH araC/xylS-type domain. DNA-binding regions (H-T-H motif) lie at residues 191 to 212 (DAVA…KQQT) and 239 to 262 (VTDI…RREF).

Binds DNA as a dimer.

The protein resides in the cytoplasm. Functionally, activates expression of the rhaBAD and rhaT operons. This chain is HTH-type transcriptional activator RhaS, found in Escherichia coli O127:H6 (strain E2348/69 / EPEC).